Reading from the N-terminus, the 424-residue chain is Enolase (424 aa).

Q162 contributes to the (2R)-2-phosphoglycerate binding site. E204 (proton donor) is an active-site residue. Mg(2+) is bound by residues D241, E284, and D311. (2R)-2-phosphoglycerate-binding residues include K336, R365, S366, and K387. K336 (proton acceptor) is an active-site residue.

Belongs to the enolase family. The cofactor is Mg(2+).

Its subcellular location is the cytoplasm. It is found in the secreted. It localises to the cell surface. The enzyme catalyses (2R)-2-phosphoglycerate = phosphoenolpyruvate + H2O. It participates in carbohydrate degradation; glycolysis; pyruvate from D-glyceraldehyde 3-phosphate: step 4/5. In terms of biological role, catalyzes the reversible conversion of 2-phosphoglycerate (2-PG) into phosphoenolpyruvate (PEP). It is essential for the degradation of carbohydrates via glycolysis. This chain is Enolase, found in Maricaulis maris (strain MCS10) (Caulobacter maris).